The following is a 66-amino-acid chain: Large ribosomal subunit protein uL29 (66 aa).

It belongs to the universal ribosomal protein uL29 family.

This is Large ribosomal subunit protein uL29 (rpmC) from Helicobacter pylori (strain J99 / ATCC 700824) (Campylobacter pylori J99).